A 277-amino-acid chain; its full sequence is Diaminopimelate epimerase (277 aa).

3 residues coordinate substrate: Asn-13, Gln-46, and Asn-66. Cys-75 serves as the catalytic Proton donor. Substrate-binding positions include 76–77 (GN), Asn-159, Asn-192, and 210–211 (ER). The Proton acceptor role is filled by Cys-219. 220-221 (GT) is a substrate binding site.

Belongs to the diaminopimelate epimerase family. In terms of assembly, homodimer.

It localises to the cytoplasm. The enzyme catalyses (2S,6S)-2,6-diaminopimelate = meso-2,6-diaminopimelate. Its pathway is amino-acid biosynthesis; L-lysine biosynthesis via DAP pathway; DL-2,6-diaminopimelate from LL-2,6-diaminopimelate: step 1/1. In terms of biological role, catalyzes the stereoinversion of LL-2,6-diaminopimelate (L,L-DAP) to meso-diaminopimelate (meso-DAP), a precursor of L-lysine and an essential component of the bacterial peptidoglycan. In Aromatoleum aromaticum (strain DSM 19018 / LMG 30748 / EbN1) (Azoarcus sp. (strain EbN1)), this protein is Diaminopimelate epimerase.